A 189-amino-acid chain; its full sequence is Anthranilate synthase component 2 (189 aa).

A Glutamine amidotransferase type-1 domain is found at 1 to 189; that stretch reads MILIIDNYDS…QLLRNFLEYS (189 aa). 52–54 contributes to the L-glutamine binding site; the sequence is GPG. The Nucleophile; for GATase activity role is filled by Cys79. L-glutamine is bound by residues Gln83 and 129-130; that span reads SL. Active-site residues include His169 and Glu171.

In terms of assembly, tetramer of two components I and two components II.

It localises to the plastid. The protein resides in the chloroplast. The enzyme catalyses chorismate + L-glutamine = anthranilate + pyruvate + L-glutamate + H(+). The protein operates within amino-acid biosynthesis; L-tryptophan biosynthesis; L-tryptophan from chorismate: step 1/5. This Pyropia yezoensis (Susabi-nori) protein is Anthranilate synthase component 2 (trpG).